A 140-amino-acid polypeptide reads, in one-letter code: Large ribosomal subunit protein uL13 (140 aa).

The protein belongs to the universal ribosomal protein uL13 family. In terms of assembly, part of the 50S ribosomal subunit.

In terms of biological role, this protein is one of the early assembly proteins of the 50S ribosomal subunit, although it is not seen to bind rRNA by itself. It is important during the early stages of 50S assembly. This Methanosarcina barkeri (strain Fusaro / DSM 804) protein is Large ribosomal subunit protein uL13.